Consider the following 447-residue polypeptide: Cellulosome-anchoring protein (447 aa).

A signal peptide spans 1-29 (MKRIKRILAVLTIFALLATINAFTFVSLA). Residues 30–180 (QTNTIEIIIG…EIIEASAPEA (151 aa)) enclose the Cohesin domain. Positions 30–180 (QTNTIEIIIG…EIIEASAPEA (151 aa)) are receptor binding site for duplicated segment of CipA. The segment at 177 to 247 (APEATPTPGS…EHAPFLKGYP (71 aa)) is disordered. The segment covering 188–200 (AGSGAGGGTGSSG) has biased composition (gly residues). Positions 201–223 (SGQPSATPTPTATEKPSTTPKTT) are enriched in low complexity. SLH domains are found at residues 216–280 (PSTT…AGKN), 281–344 (SSIT…EQGT), and 345–408 (DVKT…GAVL). The SLH 4; truncated domain occupies 409–429 (EFTDVPVNYWAYKDIAEGVIY).

The protein resides in the secreted. Its subcellular location is the cell wall. It localises to the S-layer. Functionally, anchors the cellulosome to the cell surface by binding the duplicated segment that is present at the C-terminal end of CipA. This is Cellulosome-anchoring protein (ancA) from Acetivibrio thermocellus (strain ATCC 27405 / DSM 1237 / JCM 9322 / NBRC 103400 / NCIMB 10682 / NRRL B-4536 / VPI 7372) (Clostridium thermocellum).